A 481-amino-acid polypeptide reads, in one-letter code: MKAEKVMEREIETTPIEPLSPMSHMLSSPNFFIVITFGFKTRCNRSAFVDGINNTLINAPRFSSKMEINYKKKGEPVWIPVKLRVDDHIIVPDLEYSNIQNPDQFVEDYTSNIANIPMDMSKPLWEFHLLNMKTSKAESLAIVKIHHSIGDGMSLMSLLLACSRKISDPDALVSNTTATKKPADSMAWWLFVGFWFMIRVTFTTIVEFSKLMLTVCFLEDTKNPLMGNPSDGFQSWKVVHRIISFEDVKLIKDTMNMKVNDVLLGMTQAGLSRYLSSKYDGSTAEKKKILEKLRVRGAVAINLRPATKIEDLADMMAKGSKCRWGNFIGTVIFPLWVKSEKDPLEYIRRAKATMDRKKISLEAFFFYGIIKFTLKFFGGKAVEAFGKRIFGHTSLAFSNVKGPDEEISFFHHPISYIAGSALVGAQALNIHFISYVDKIVINLAVDTTTIQDPNRLCDDMVEALEIIKSATQGEIFHKTEV.

Residues Met1–Ser185 are Cytoplasmic-facing. Catalysis depends on His147, which acts as the Proton acceptor. Residues Met186 to Val206 traverse the membrane as a helical segment. The Lumenal portion of the chain corresponds to Glu207–Val481.

The protein in the N-terminal section; belongs to the long-chain O-acyltransferase family. As to expression, expressed in flowers, siliques, top parts of stems, and leaves. Not found in roots, seeds and young seedlings.

The protein localises to the cell membrane. It localises to the endoplasmic reticulum membrane. The enzyme catalyses a long chain fatty alcohol + a fatty acyl-CoA = a wax ester + CoA. It carries out the reaction an acyl-CoA + a 1,2-diacyl-sn-glycerol = a triacyl-sn-glycerol + CoA. Its pathway is glycerolipid metabolism; triacylglycerol biosynthesis. It functions in the pathway lipid metabolism. Its function is as follows. Bifunctional wax ester synthase/diacylglycerol acyltransferase. Involved in cuticular wax biosynthesis. Required to reduce leaf water loss, especially during drought. The protein is Wax ester synthase/diacylglycerol acyltransferase 1 of Arabidopsis thaliana (Mouse-ear cress).